Here is a 232-residue protein sequence, read N- to C-terminus: Syntaxin-51 (232 aa).

The Cytoplasmic segment spans residues Met-1–Cys-208. The t-SNARE coiled-coil homology domain occupies Arg-136–Met-198. The helical; Anchor for type IV membrane protein transmembrane segment at Met-209–Val-229 threads the bilayer. Over Lys-230–Met-232 the chain is Vesicular.

The protein belongs to the syntaxin family. Interacts with VTI11 and either SYP21, or SYP22, or SYP61 in the prevacuolar compartment, or with VTI12 and SYP61 in the trans-Golgi network to form t-SNARE complexes. Expressed in root, leaf, stem, flower and silique.

It localises to the golgi apparatus. The protein resides in the trans-Golgi network membrane. The protein localises to the prevacuolar compartment membrane. Its function is as follows. Vesicle trafficking protein that functions in the secretory pathway. This is Syntaxin-51 (SYP51) from Arabidopsis thaliana (Mouse-ear cress).